The primary structure comprises 379 residues: Dual-specificity RNA methyltransferase RlmN (379 aa).

Glu95 functions as the Proton acceptor in the catalytic mechanism. Residues 101–345 form the Radical SAM core domain; it reads EETRGTLCVS…TTVRKTRGDD (245 aa). The cysteines at positions 108 and 350 are disulfide-linked. Residues Cys115, Cys119, and Cys122 each coordinate [4Fe-4S] cluster. Residues 176 to 177, Ser208, 230 to 232, and Asn307 contribute to the S-adenosyl-L-methionine site; these read GE and SLH. Cys350 (S-methylcysteine intermediate) is an active-site residue.

This sequence belongs to the radical SAM superfamily. RlmN family. The cofactor is [4Fe-4S] cluster.

It is found in the cytoplasm. The catalysed reaction is adenosine(2503) in 23S rRNA + 2 reduced [2Fe-2S]-[ferredoxin] + 2 S-adenosyl-L-methionine = 2-methyladenosine(2503) in 23S rRNA + 5'-deoxyadenosine + L-methionine + 2 oxidized [2Fe-2S]-[ferredoxin] + S-adenosyl-L-homocysteine. It catalyses the reaction adenosine(37) in tRNA + 2 reduced [2Fe-2S]-[ferredoxin] + 2 S-adenosyl-L-methionine = 2-methyladenosine(37) in tRNA + 5'-deoxyadenosine + L-methionine + 2 oxidized [2Fe-2S]-[ferredoxin] + S-adenosyl-L-homocysteine. Functionally, specifically methylates position 2 of adenine 2503 in 23S rRNA and position 2 of adenine 37 in tRNAs. m2A2503 modification seems to play a crucial role in the proofreading step occurring at the peptidyl transferase center and thus would serve to optimize ribosomal fidelity. This chain is Dual-specificity RNA methyltransferase RlmN, found in Burkholderia cenocepacia (strain HI2424).